The primary structure comprises 248 residues: Ribosomal RNA small subunit methyltransferase J (248 aa).

Residues 98–99 (RD), 114–115 (ER), 150–151 (SS), and Asp-168 each bind S-adenosyl-L-methionine.

The protein belongs to the methyltransferase superfamily. RsmJ family.

Its subcellular location is the cytoplasm. The enzyme catalyses guanosine(1516) in 16S rRNA + S-adenosyl-L-methionine = N(2)-methylguanosine(1516) in 16S rRNA + S-adenosyl-L-homocysteine + H(+). Specifically methylates the guanosine in position 1516 of 16S rRNA. The protein is Ribosomal RNA small subunit methyltransferase J of Shewanella baltica (strain OS195).